The sequence spans 409 residues: Argininosuccinate synthase (409 aa).

ATP-binding positions include 13–21 (AYSGGLDTS) and alanine 40. L-citrulline is bound by residues tyrosine 91 and serine 96. Glycine 121 is an ATP binding site. The L-aspartate site is built by threonine 123, asparagine 127, and aspartate 128. Residue asparagine 127 coordinates L-citrulline. Residues arginine 131, serine 183, serine 192, glutamate 268, and tyrosine 280 each contribute to the L-citrulline site.

It belongs to the argininosuccinate synthase family. Type 1 subfamily. As to quaternary structure, homotetramer.

It is found in the cytoplasm. It carries out the reaction L-citrulline + L-aspartate + ATP = 2-(N(omega)-L-arginino)succinate + AMP + diphosphate + H(+). Its pathway is amino-acid biosynthesis; L-arginine biosynthesis; L-arginine from L-ornithine and carbamoyl phosphate: step 2/3. In Saccharophagus degradans (strain 2-40 / ATCC 43961 / DSM 17024), this protein is Argininosuccinate synthase.